We begin with the raw amino-acid sequence, 221 residues long: Urease accessory protein UreF (221 aa).

This sequence belongs to the UreF family. As to quaternary structure, ureD, UreF and UreG form a complex that acts as a GTP-hydrolysis-dependent molecular chaperone, activating the urease apoprotein by helping to assemble the nickel containing metallocenter of UreC. The UreE protein probably delivers the nickel.

The protein localises to the cytoplasm. In terms of biological role, required for maturation of urease via the functional incorporation of the urease nickel metallocenter. The sequence is that of Urease accessory protein UreF from Vibrio parahaemolyticus.